Reading from the N-terminus, the 47-residue chain is Delta-actitoxin-Axm1d (47 aa).

Intrachain disulfides connect cysteine 4-cysteine 44, cysteine 6-cysteine 34, and cysteine 27-cysteine 45.

It belongs to the sea anemone sodium channel inhibitory toxin family. Type I subfamily.

The protein resides in the secreted. Its subcellular location is the nematocyst. In terms of biological role, binds specifically to voltage-gated sodium channels (Nav), thereby delaying their inactivation during signal transduction. Thus it strongly stimulates mammalian cardiac muscle contraction. The protein is Delta-actitoxin-Axm1d of Anthopleura xanthogrammica (Giant green sea anemone).